We begin with the raw amino-acid sequence, 298 residues long: Enoyl-CoA hydratase AKT6-1 (298 aa).

Residues M1 to N23 are disordered.

It belongs to the enoyl-CoA hydratase/isomerase family.

It functions in the pathway mycotoxin biosynthesis. Functionally, enoyl-CoA hydratase; part of the gene clusters that mediate the biosynthesis of the host-selective toxins (HSTs) AK-toxins responsible for Japanese pear black spot disease by the Japanese pear pathotype. AK-toxins are esters of 9,10-epoxy 8-hydroxy 9-methyldecatrienoic acid (EDA). On cellular level, AK-toxins affect plasma membrane of susceptible cells and cause a sudden increase in loss of K(+) after a few minutes of toxin treatment. The acyl-CoA ligase AKT1, the hydrolase AKT2 and enoyl-CoA hydratase AKT3 are all involved in the biosynthesis of the AK-, AF- and ACT-toxin common 9,10-epoxy-8-hydroxy-9-methyl-decatrienoic acid (EDA) structural moiety. Part of the EDA biosynthesis occurs in the peroxisome since these 3 enzymes are localized in peroxisomes. The exact roles of the 3 enzymes, as well as of additional AK-toxin clusters enzymes, including AKT4, AKT6 and AKTS1, have still to be elucidated. The Cytochrome P450 monooxygenase AKT7 on the other side functions to limit production of EDA and AK-toxin, probably via the catalysis of a side reaction of EDA or its precursor. This chain is Enoyl-CoA hydratase AKT6-1, found in Alternaria alternata (Alternaria rot fungus).